A 211-amino-acid chain; its full sequence is Mitotic spindle assembly checkpoint protein MAD2B (211 aa).

One can recognise an HORMA domain in the interval Q13–V203.

In terms of assembly, homooligomer. Interacts with rev1. Interacts with rev3l. Interacts with fzr1 (in complex with the anaphase promoting complex APC). May interact with cdc20.

The protein localises to the nucleus. The protein resides in the cytoplasm. Its subcellular location is the cytoskeleton. It is found in the spindle. Adapter protein able to interact with different proteins and involved in different biological processes. Mediates the interaction between the error-prone DNA polymerase zeta catalytic subunit rev3l and the inserter polymerase rev1, thereby mediating the second polymerase switching in translesion DNA synthesis. Translesion DNA synthesis releases the replication blockade of replicative polymerases, stalled in presence of DNA lesions. May also play a role in signal transduction in response to DNA damage. May regulate the activation of the anaphase promoting complex APC thereby regulating progression through the cell cycle. Through transcriptional regulation may play a role in epithelial-mesenchymal transdifferentiation. Functionally, inhibits the fzr1-APC complex activity during mitosis. Plays a role in progression of mitosis. The sequence is that of Mitotic spindle assembly checkpoint protein MAD2B (mad2l2) from Xenopus laevis (African clawed frog).